A 643-amino-acid chain; its full sequence is Phosphomethylpyrimidine synthase (643 aa).

Substrate is bound by residues Asn-248, Met-277, Tyr-306, His-342, 362 to 364 (SRG), 403 to 406 (DGLR), and Glu-442. Residue His-446 coordinates Zn(2+). Tyr-469 serves as a coordination point for substrate. Zn(2+) is bound at residue His-510. 3 residues coordinate [4Fe-4S] cluster: Cys-590, Cys-593, and Cys-598.

The protein belongs to the ThiC family. As to quaternary structure, homodimer. [4Fe-4S] cluster is required as a cofactor.

It carries out the reaction 5-amino-1-(5-phospho-beta-D-ribosyl)imidazole + S-adenosyl-L-methionine = 4-amino-2-methyl-5-(phosphooxymethyl)pyrimidine + CO + 5'-deoxyadenosine + formate + L-methionine + 3 H(+). The protein operates within cofactor biosynthesis; thiamine diphosphate biosynthesis. In terms of biological role, catalyzes the synthesis of the hydroxymethylpyrimidine phosphate (HMP-P) moiety of thiamine from aminoimidazole ribotide (AIR) in a radical S-adenosyl-L-methionine (SAM)-dependent reaction. This chain is Phosphomethylpyrimidine synthase, found in Burkholderia mallei (strain NCTC 10247).